A 345-amino-acid polypeptide reads, in one-letter code: Holliday junction branch migration complex subunit RuvB (345 aa).

The tract at residues 4–194 (TDKLFGAAPE…FGIVARLEFY (191 aa)) is large ATPase domain (RuvB-L). ATP contacts are provided by residues Leu-33, Arg-34, Gly-75, Lys-78, Thr-79, Thr-80, 141 to 143 (EDY), Arg-184, Tyr-194, and Arg-231. Thr-79 serves as a coordination point for Mg(2+). The segment at 195 to 265 (NAEELTRIVS…VADAALAMLD (71 aa)) is small ATPAse domain (RuvB-S). The segment at 268-345 (PAGLDVMDRK…LHFGLPVKDA (78 aa)) is head domain (RuvB-H). Residues Arg-323 and Arg-328 each contribute to the DNA site.

It belongs to the RuvB family. In terms of assembly, homohexamer. Forms an RuvA(8)-RuvB(12)-Holliday junction (HJ) complex. HJ DNA is sandwiched between 2 RuvA tetramers; dsDNA enters through RuvA and exits via RuvB. An RuvB hexamer assembles on each DNA strand where it exits the tetramer. Each RuvB hexamer is contacted by two RuvA subunits (via domain III) on 2 adjacent RuvB subunits; this complex drives branch migration. In the full resolvosome a probable DNA-RuvA(4)-RuvB(12)-RuvC(2) complex forms which resolves the HJ.

It is found in the cytoplasm. The enzyme catalyses ATP + H2O = ADP + phosphate + H(+). Functionally, the RuvA-RuvB-RuvC complex processes Holliday junction (HJ) DNA during genetic recombination and DNA repair, while the RuvA-RuvB complex plays an important role in the rescue of blocked DNA replication forks via replication fork reversal (RFR). RuvA specifically binds to HJ cruciform DNA, conferring on it an open structure. The RuvB hexamer acts as an ATP-dependent pump, pulling dsDNA into and through the RuvAB complex. RuvB forms 2 homohexamers on either side of HJ DNA bound by 1 or 2 RuvA tetramers; 4 subunits per hexamer contact DNA at a time. Coordinated motions by a converter formed by DNA-disengaged RuvB subunits stimulates ATP hydrolysis and nucleotide exchange. Immobilization of the converter enables RuvB to convert the ATP-contained energy into a lever motion, pulling 2 nucleotides of DNA out of the RuvA tetramer per ATP hydrolyzed, thus driving DNA branch migration. The RuvB motors rotate together with the DNA substrate, which together with the progressing nucleotide cycle form the mechanistic basis for DNA recombination by continuous HJ branch migration. Branch migration allows RuvC to scan DNA until it finds its consensus sequence, where it cleaves and resolves cruciform DNA. This is Holliday junction branch migration complex subunit RuvB from Chromobacterium violaceum (strain ATCC 12472 / DSM 30191 / JCM 1249 / CCUG 213 / NBRC 12614 / NCIMB 9131 / NCTC 9757 / MK).